Consider the following 404-residue polypeptide: Flavohemoprotein (404 aa).

One can recognise a Globin domain in the interval 1-138; the sequence is MLSEQTRSLV…LADTLIGIEN (138 aa). His-85 serves as a coordination point for heme b. Active-site charge relay system residues include Tyr-95 and Glu-137. Residues 149 to 404 are reductase; that stretch reads GGWSGWRPFR…EVFGSHPGDD (256 aa). Positions 152–263 constitute an FAD-binding FR-type domain; it reads SGWRPFRVAK…SAPQGDFFLH (112 aa). Residues Tyr-190 and 206 to 209 each bind FAD; that span reads RQYS. 276–281 contributes to the NADP(+) binding site; sequence GVGQTP. 396–399 contacts FAD; it reads VFGS.

It belongs to the globin family. Two-domain flavohemoproteins subfamily. This sequence in the C-terminal section; belongs to the flavoprotein pyridine nucleotide cytochrome reductase family. It depends on heme b as a cofactor. FAD is required as a cofactor.

The catalysed reaction is 2 nitric oxide + NADPH + 2 O2 = 2 nitrate + NADP(+) + H(+). The enzyme catalyses 2 nitric oxide + NADH + 2 O2 = 2 nitrate + NAD(+) + H(+). Is involved in NO detoxification in an aerobic process, termed nitric oxide dioxygenase (NOD) reaction that utilizes O(2) and NAD(P)H to convert NO to nitrate, which protects the bacterium from various noxious nitrogen compounds. Therefore, plays a central role in the inducible response to nitrosative stress. This Chromobacterium violaceum (strain ATCC 12472 / DSM 30191 / JCM 1249 / CCUG 213 / NBRC 12614 / NCIMB 9131 / NCTC 9757 / MK) protein is Flavohemoprotein.